We begin with the raw amino-acid sequence, 331 residues long: MKVNEEGFAIDDKEYAMKTELKFASKHSSRLKIERNVMESYSKCDAQCKEHFSELIDFGQSPVWKWIVMTIVGPSLEELKMKYKPSDIPPSTILQCGLQTMKAIHDFHQIGFLHRDIKPANYCIGYGSKSETIYVLDFGLARKYRLPNGQVRPPRPKTKMIGTPRYCSRASHRCEELGRRDDYESWFFMFIDLVDTTLIDWKGLTRPDAYAKKQELFTKLKTYEKHPMFKVISIYLDNLVYDSEVKFGVLREAITDYARGCKLTLKEPLVWFNQSTCPSPSTAPGTGASRMATNIDLKSIASDRNEENSLDRSKTGTLSFNNSKNKKPSRY.

In terms of domain architecture, Protein kinase spans 1 to 270; sequence MKVNEEGFAI…CKLTLKEPLV (270 aa). Aspartate 116 serves as the catalytic Proton acceptor. Basic and acidic residues predominate over residues 302–314; it reads SDRNEENSLDRSK. The interval 302 to 331 is disordered; sequence SDRNEENSLDRSKTGTLSFNNSKNKKPSRY.

This sequence belongs to the protein kinase superfamily. Ser/Thr protein kinase family.

The catalysed reaction is L-seryl-[protein] + ATP = O-phospho-L-seryl-[protein] + ADP + H(+). It carries out the reaction L-threonyl-[protein] + ATP = O-phospho-L-threonyl-[protein] + ADP + H(+). This Caenorhabditis elegans protein is Putative serine/threonine-protein kinase ZK507.1.